The sequence spans 326 residues: MKMPNTLHSVSISTDFPSPNVESEAADVNEYSSTSKFETLGNQSSTNLGFSNSLQDKWDCWKRDLWSIWWSLSRKATRFYRWLSRSLKWRPVTYETVYPQTYETQMSEPREVTTIVKDLNNGDSFVLNVTEPVDPEFLRANIPPVHRKHLPPRLSLVASPGTIPTRGVVVLEDWINPLLSERCKLLLQSELCNQDSYDCPGYICVYRFEQKNNPSVVLGDSTLIQISRVSDLQRHLREYPKNCAFSRSVLEIFPDPGKTSKPCQVSFKVERLVHKELNEYLSWMQPFTCDSCGSLHENWLQIDSKQWDQIRGVILRWVEYSRVIYA.

It is found in the cytoplasm. Its function is as follows. Has a role in meiosis. The chain is Meiotically up-regulated gene 113 protein (mug113) from Schizosaccharomyces pombe (strain 972 / ATCC 24843) (Fission yeast).